A 336-amino-acid chain; its full sequence is NADH-quinone oxidoreductase subunit H (336 aa).

The next 8 membrane-spanning stretches (helical) occupy residues 4-24, 75-95, 108-128, 154-174, 181-201, 233-253, 272-292, and 308-328; these read YILW…LVVA, YLFF…WAVI, LGLL…VIAG, MGFA…TGII, LWHW…IAGI, LFFL…SIMF, FVPG…MFLW, and LGWK…ACMV.

The protein belongs to the complex I subunit 1 family. In terms of assembly, NDH-1 is composed of 14 different subunits. Subunits NuoA, H, J, K, L, M, N constitute the membrane sector of the complex.

The protein localises to the cell inner membrane. The catalysed reaction is a quinone + NADH + 5 H(+)(in) = a quinol + NAD(+) + 4 H(+)(out). Functionally, NDH-1 shuttles electrons from NADH, via FMN and iron-sulfur (Fe-S) centers, to quinones in the respiratory chain. The immediate electron acceptor for the enzyme in this species is believed to be ubiquinone. Couples the redox reaction to proton translocation (for every two electrons transferred, four hydrogen ions are translocated across the cytoplasmic membrane), and thus conserves the redox energy in a proton gradient. This subunit may bind ubiquinone. The protein is NADH-quinone oxidoreductase subunit H of Francisella philomiragia subsp. philomiragia (strain ATCC 25017 / CCUG 19701 / FSC 153 / O#319-036).